Consider the following 417-residue polypeptide: Succinate--CoA ligase [ADP-forming] subunit beta, mitochondrial (417 aa).

A mitochondrion-targeting transit peptide spans 1 to 24 (MLRKLANQSLSVAGKWQQQQLRRL). Positions 32-275 (AELMSKYGIN…SSQEDPREVA (244 aa)) constitute an ATP-grasp domain. ATP-binding positions include K71, 78–80 (GRG), and E138. The Mg(2+) site is built by N230 and D244. Residues N295 and 352-354 (GIM) contribute to the substrate site.

Belongs to the succinate/malate CoA ligase beta subunit family. As to quaternary structure, heterodimer of an alpha and a beta subunit. Mg(2+) is required as a cofactor. In terms of tissue distribution, expressed in roots, stems, flowers, leaves and fruits.

The protein localises to the mitochondrion. The catalysed reaction is succinate + ATP + CoA = succinyl-CoA + ADP + phosphate. The protein operates within carbohydrate metabolism; tricarboxylic acid cycle; succinate from succinyl-CoA (ligase route): step 1/1. Succinyl-CoA synthetase functions in the citric acid cycle (TCA), coupling the hydrolysis of succinyl-CoA to the synthesis of ATP and thus represents the only step of substrate-level phosphorylation in the TCA. The beta subunit provides nucleotide specificity of the enzyme and binds the substrate succinate, while the binding sites for coenzyme A and phosphate are found in the alpha subunit. The sequence is that of Succinate--CoA ligase [ADP-forming] subunit beta, mitochondrial from Solanum lycopersicum (Tomato).